The following is a 325-amino-acid chain: Protease HtpX homolog 2 (325 aa).

The next 2 helical transmembrane spans lie at 10 to 30 (LNMA…ALAV) and 41 to 61 (VGLI…QWLF). Histidine 147 contributes to the Zn(2+) binding site. Glutamate 148 is a catalytic residue. Zn(2+) is bound at residue histidine 151. The next 2 membrane-spanning stretches (helical) occupy residues 159–179 (LLMA…WLFW) and 196–216 (LVFL…LLVL). Residue glutamate 223 participates in Zn(2+) binding.

This sequence belongs to the peptidase M48B family. It depends on Zn(2+) as a cofactor.

The protein localises to the cell membrane. The polypeptide is Protease HtpX homolog 2 (Saccharolobus solfataricus (strain ATCC 35092 / DSM 1617 / JCM 11322 / P2) (Sulfolobus solfataricus)).